The chain runs to 104 residues: Inclusion membrane protein F (104 aa).

2 helical membrane-spanning segments follow: residues 39–59 (LVVA…SLVA) and 70–90 (LAVL…VLFI).

The protein resides in the secreted. It is found in the host vacuole. The protein localises to the host pathogen-containing vacuole. Its subcellular location is the host pathogen-containing vacuole membrane. In terms of biological role, inclusion membrane protein probably involved in early modification events of the chlamydial inclusion. The chain is Inclusion membrane protein F (incF) from Chlamydia trachomatis serovar D (strain ATCC VR-885 / DSM 19411 / UW-3/Cx).